The sequence spans 156 residues: Ribosome-binding factor A (156 aa).

The segment at 124-156 (TRAEYAGEAQPYRLEEEPEGSGDEVPPPGGDQR) is disordered.

This sequence belongs to the RbfA family. In terms of assembly, monomer. Binds 30S ribosomal subunits, but not 50S ribosomal subunits or 70S ribosomes.

Its subcellular location is the cytoplasm. Its function is as follows. One of several proteins that assist in the late maturation steps of the functional core of the 30S ribosomal subunit. Associates with free 30S ribosomal subunits (but not with 30S subunits that are part of 70S ribosomes or polysomes). Required for efficient processing of 16S rRNA. May interact with the 5'-terminal helix region of 16S rRNA. The chain is Ribosome-binding factor A from Salinispora tropica (strain ATCC BAA-916 / DSM 44818 / JCM 13857 / NBRC 105044 / CNB-440).